A 127-amino-acid polypeptide reads, in one-letter code: Large ribosomal subunit protein bL20 (127 aa).

It belongs to the bacterial ribosomal protein bL20 family.

In terms of biological role, binds directly to 23S ribosomal RNA and is necessary for the in vitro assembly process of the 50S ribosomal subunit. It is not involved in the protein synthesizing functions of that subunit. In Renibacterium salmoninarum (strain ATCC 33209 / DSM 20767 / JCM 11484 / NBRC 15589 / NCIMB 2235), this protein is Large ribosomal subunit protein bL20.